The chain runs to 205 residues: Ribosomal RNA small subunit methyltransferase G (205 aa).

Residues Gly-66, Phe-71, 119–120 (IE), and Arg-135 each bind S-adenosyl-L-methionine.

It belongs to the methyltransferase superfamily. RNA methyltransferase RsmG family.

It is found in the cytoplasm. It catalyses the reaction guanosine(527) in 16S rRNA + S-adenosyl-L-methionine = N(7)-methylguanosine(527) in 16S rRNA + S-adenosyl-L-homocysteine. Specifically methylates the N7 position of guanine in position 527 of 16S rRNA. This is Ribosomal RNA small subunit methyltransferase G from Rhizobium johnstonii (strain DSM 114642 / LMG 32736 / 3841) (Rhizobium leguminosarum bv. viciae).